The following is a 975-amino-acid chain: Kinesin heavy chain (975 aa).

Positions 12–333 (SIKVVCRFRP…LDFGRRAKTV (322 aa)) constitute a Kinesin motor domain. 92–99 (GQTSSGKT) contacts ATP. The interval 180–321 (VSSPEDVFEV…PASFNESETK (142 aa)) is microtubule-binding. Residues 335 to 931 (NVVCVNEELT…DRIKEAVRQK (597 aa)) adopt a coiled-coil conformation. Residues 810–891 (VAKELQTLHN…LPKLEKRLRC (82 aa)) are necessary for associating with milt. The globular stretch occupies residues 932–975 (HLGRRGPQAQIAKPIRSGQGAIAIRGGGAVGGPSPLAQVNPVNS).

It belongs to the TRAFAC class myosin-kinesin ATPase superfamily. Kinesin family. Kinesin subfamily. In terms of assembly, oligomer composed of two heavy chains and two light chains.

The protein resides in the cytoplasm. It localises to the cytoskeleton. Functionally, kinesin is a microtubule-associated force-producing protein that may play a role in organelle transport. Milt and Miro form an essential protein complex that links Khc to mitochondria for light chain-independent, anterograde transport of mitochondria. This chain is Kinesin heavy chain (Khc), found in Drosophila melanogaster (Fruit fly).